The sequence spans 1512 residues: MDRNAVLYGVLEHRLPKWVELSDDTDLEPFFFSSVRYITAGSEDAIMIQALNLNTDEIVVFLVTNLNFMALIPTVYIENPGIRQLIASTPISYRSPITVFNGDLKKWMDCDLFVFGTMAAQKAFIKAGNSVLGSLGGNVYTYGDHVSNFDGNTPVLQNNLMCSHVYYTRYKTDVYAPWEFYYDQKRDQGYLMSLPAIIPRCKREGAFDIETIVHENAMDQDLNCQKFFKSEFRSMEESQVLIQRFREAGVTGLPPSPFVGITQKLHEIVSISLVVCNYHKTGPKKKEYYVYYNTKKMENPMEMIPVEHLHLDASRIKFEACKNEFYMLLAFINRLRKSVNVLYVYNAQFDIQVIQQRLRYYAFKQRAPRCCKGHDDIPHEWGKALMEKWEAFLSVKPQLFKAQILMGQDILKANYLKLLEGIGSVLAQAKSTMAKMCTIKERIDSYRKMKDTVQNFKSHGFGCDIIDMMYVCKRKEFEAKDGSLNTVAQLIIKKFKPHKATPKIHKMDDITYDKLDGYYRAGGTKIAECLIYNLIDSLLVIRIAKNLKPMEEYIYRQLACYNIDTAAHTRGVMNFCGFIQSTKVVEVSRNKARLDAGIVMATDYIRNSLFTPETIPRRGGFVMAPLTGLFFARPTQCFELCLDFTSMYPSMMCDLNISPETIVDSDKTNRVGDYMGYDWSKIDQGFEKFTLVLRVDRTDPENPKLVRHTSDTSLSLKRYLRLRTEHKRALKQSSGSVAEYHNRLQNEMKICTNTHYGVSEHTCSLMITTQGQHKIKLVNEFIKTLNRTGHSLFPNYGDTDSTMLYHPSDESETQLEDMVTLEDEMRAELREYMLKKLSAELVNRVKEKTKRTDTFVQSFLSDVETVLFDDMVEKLRLFSQGEVIEPFKDGGTWWVVDPLTGIWMDCSTPFSSELICKLEYENASSIGCHVAKKMYLSLVHELNNGEIINTKIKKRGMTGFKSSRFGATESITNDFMDLIFNGGALVKTGHLEALKPVTWAKLSAPADILHFSEPPVYENGICLNMNSITLIPHRVTAVTRLPCPDIKGGELVYVDLHESTSGKSSVLVLVLADGCALNHIFSSANVLHRELSFETIAMFRAFFVGAGFLDPNSIVFYERIPRLKPEFLSKITNYELFTGKKLKIPFVTLHKRKTTIQAIVKEDKKQIDYPEEWIKQDPAMAMFRRYPIDLRLERMIMDYFGSGLKCTLATFTPPKYTVSGERSRHSIVIKNHVDKHYLNDNSKFLAHVVMDRAMPTTCYIHDDIDVKAMIQSVISRVVRMIQDTQVRLQELSAAGNKLFHMFFNQLPPEMNNLDISFKYNPLVDHALQGQKGVPGLQYGNPEQIYTDMITEMTALLPRIGHMVEFMEWSQELSSSKTLCLLLPKIARDLNVPPLVTSLNDDTGNAMLIAFAHKIYIATAMLHILHGENLETHDLGPQTGTGVVGEPPKHCTGAQLREWFIDLQKTLALDAPSTHCAGCADFWLTHGSDPNFIEKMYRVNGGVFVRKIKKICL.

Belongs to the DNA polymerase type-B family.

Its subcellular location is the host nucleus. It carries out the reaction DNA(n) + a 2'-deoxyribonucleoside 5'-triphosphate = DNA(n+1) + diphosphate. The polypeptide is DNA polymerase (57/58) (Ictalurid herpesvirus 1 (strain Auburn) (IcHV-1)).